We begin with the raw amino-acid sequence, 238 residues long: Ribonuclease PH (238 aa).

Residues Arg86 and 124-126 (GTR) contribute to the phosphate site.

Belongs to the RNase PH family. In terms of assembly, homohexameric ring arranged as a trimer of dimers.

It carries out the reaction tRNA(n+1) + phosphate = tRNA(n) + a ribonucleoside 5'-diphosphate. Its function is as follows. Phosphorolytic 3'-5' exoribonuclease that plays an important role in tRNA 3'-end maturation. Removes nucleotide residues following the 3'-CCA terminus of tRNAs; can also add nucleotides to the ends of RNA molecules by using nucleoside diphosphates as substrates, but this may not be physiologically important. Probably plays a role in initiation of 16S rRNA degradation (leading to ribosome degradation) during starvation. In Shigella flexneri serotype 5b (strain 8401), this protein is Ribonuclease PH.